A 234-amino-acid polypeptide reads, in one-letter code: ATP-dependent dethiobiotin synthetase BioD (234 aa).

An ATP-binding site is contributed by D12–I17. Residue T16 participates in Mg(2+) binding. The active site involves K37. Residue T41 coordinates substrate. ATP is bound by residues D54 and E115 to G118. 2 residues coordinate Mg(2+): D54 and E115.

Belongs to the dethiobiotin synthetase family. As to quaternary structure, homodimer. Mg(2+) serves as cofactor.

It is found in the cytoplasm. It catalyses the reaction (7R,8S)-7,8-diammoniononanoate + CO2 + ATP = (4R,5S)-dethiobiotin + ADP + phosphate + 3 H(+). The protein operates within cofactor biosynthesis; biotin biosynthesis; biotin from 7,8-diaminononanoate: step 1/2. Catalyzes a mechanistically unusual reaction, the ATP-dependent insertion of CO2 between the N7 and N8 nitrogen atoms of 7,8-diaminopelargonic acid (DAPA, also called 7,8-diammoniononanoate) to form a ureido ring. The chain is ATP-dependent dethiobiotin synthetase BioD from Lysinibacillus sphaericus (strain C3-41).